A 696-amino-acid chain; its full sequence is Polyribonucleotide nucleotidyltransferase (696 aa).

2 residues coordinate Mg(2+): D483 and D489. The region spanning 550–609 (PRITTIWVKVDKIRDVIGSGGKNIRSVTEATGVSIDIDDTGKINIASTNKEACDLAIKMI) is the KH domain. The S1 motif domain maps to 619–687 (GKLYMGTVKK…KQGKIKLSRK (69 aa)).

The protein belongs to the polyribonucleotide nucleotidyltransferase family. It depends on Mg(2+) as a cofactor.

Its subcellular location is the cytoplasm. The catalysed reaction is RNA(n+1) + phosphate = RNA(n) + a ribonucleoside 5'-diphosphate. Involved in mRNA degradation. Catalyzes the phosphorolysis of single-stranded polyribonucleotides processively in the 3'- to 5'-direction. This chain is Polyribonucleotide nucleotidyltransferase, found in Citrifermentans bemidjiense (strain ATCC BAA-1014 / DSM 16622 / JCM 12645 / Bem) (Geobacter bemidjiensis).